Here is a 337-residue protein sequence, read N- to C-terminus: 6-phosphogluconolactonase (337 aa).

This sequence belongs to the cycloisomerase 2 family.

The catalysed reaction is 6-phospho-D-glucono-1,5-lactone + H2O = 6-phospho-D-gluconate + H(+). It participates in carbohydrate degradation; pentose phosphate pathway; D-ribulose 5-phosphate from D-glucose 6-phosphate (oxidative stage): step 2/3. Its function is as follows. Catalyzes the hydrolysis of 6-phosphogluconolactone to 6-phosphogluconate. This Blochmanniella pennsylvanica (strain BPEN) protein is 6-phosphogluconolactonase.